The following is a 506-amino-acid chain: Histidine ammonia-lyase (506 aa).

The 5-imidazolinone (Ala-Gly) cross-link spans 142–144 (ASG). Ser-143 carries the 2,3-didehydroalanine (Ser) modification.

It belongs to the PAL/histidase family. In terms of processing, contains an active site 4-methylidene-imidazol-5-one (MIO), which is formed autocatalytically by cyclization and dehydration of residues Ala-Ser-Gly.

Its subcellular location is the cytoplasm. The catalysed reaction is L-histidine = trans-urocanate + NH4(+). The protein operates within amino-acid degradation; L-histidine degradation into L-glutamate; N-formimidoyl-L-glutamate from L-histidine: step 1/3. The polypeptide is Histidine ammonia-lyase (Bacillus cereus (strain ATCC 14579 / DSM 31 / CCUG 7414 / JCM 2152 / NBRC 15305 / NCIMB 9373 / NCTC 2599 / NRRL B-3711)).